The sequence spans 99 residues: uncharacterized protein (99 aa).

This is an uncharacterized protein from Lepidoptera (butterflies and moths).